Consider the following 349-residue polypeptide: Methylthioribose-1-phosphate isomerase (349 aa).

Residues 49–51, Arg92, and Gln199 each bind substrate; that span reads RGA. Asp240 acts as the Proton donor in catalysis. 250–251 contacts substrate; it reads NK.

Belongs to the eIF-2B alpha/beta/delta subunits family. MtnA subfamily.

The catalysed reaction is 5-(methylsulfanyl)-alpha-D-ribose 1-phosphate = 5-(methylsulfanyl)-D-ribulose 1-phosphate. Its pathway is amino-acid biosynthesis; L-methionine biosynthesis via salvage pathway; L-methionine from S-methyl-5-thio-alpha-D-ribose 1-phosphate: step 1/6. In terms of biological role, catalyzes the interconversion of methylthioribose-1-phosphate (MTR-1-P) into methylthioribulose-1-phosphate (MTRu-1-P). The protein is Methylthioribose-1-phosphate isomerase of Syntrophobacter fumaroxidans (strain DSM 10017 / MPOB).